A 1407-amino-acid polypeptide reads, in one-letter code: DNA-directed RNA polymerase subunit beta' (1407 aa).

Cysteine 70, cysteine 72, cysteine 85, and cysteine 88 together coordinate Zn(2+). Mg(2+)-binding residues include aspartate 460, aspartate 462, and aspartate 464. Cysteine 814, cysteine 888, cysteine 895, and cysteine 898 together coordinate Zn(2+).

It belongs to the RNA polymerase beta' chain family. The RNAP catalytic core consists of 2 alpha, 1 beta, 1 beta' and 1 omega subunit. When a sigma factor is associated with the core the holoenzyme is formed, which can initiate transcription. The cofactor is Mg(2+). Requires Zn(2+) as cofactor.

The catalysed reaction is RNA(n) + a ribonucleoside 5'-triphosphate = RNA(n+1) + diphosphate. DNA-dependent RNA polymerase catalyzes the transcription of DNA into RNA using the four ribonucleoside triphosphates as substrates. The protein is DNA-directed RNA polymerase subunit beta' of Salmonella paratyphi B (strain ATCC BAA-1250 / SPB7).